Consider the following 885-residue polypeptide: Cadherin-related family member 3 (885 aa).

The N-terminal stretch at 1–19 is a signal peptide; sequence MQEAIILLALLGAMSGGEA. Topologically, residues 20-713 are extracellular; the sequence is LHLILLPATG…VYSPSAWYVP (694 aa). Cadherin domains lie at 23-132, 136-236, 237-344, 346-466, 462-566, and 567-695; these read ILLP…PPQF, LAEG…VPRF, TSPT…NPAT, QKFT…RPSY, DRPS…KPIC, and TPNS…RPRV. N186 and N257 each carry an N-linked (GlcNAc...) asparagine glycan. A glycan (N-linked (GlcNAc...) asparagine) is linked at N624. Residues 714–734 form a helical membrane-spanning segment; the sequence is FVITLGSILLLGLLVYLVVLL. Residues 735-885 lie on the Cytoplasmic side of the membrane; sequence AKAIHRHCPC…RAYPKPHPGK (151 aa). A disordered region spans residues 808–885; sequence MPKWKESSHQ…RAYPKPHPGK (78 aa).

As to quaternary structure, (Microbial infection) Interacts (via N-terminus) with human rhinovirus C capsid proteins VP1, VP2 and VP3. In terms of tissue distribution, expressed in bronchial epithelium from adults and in fetal lung tissue.

The protein resides in the cell membrane. Functionally, cadherins are calcium-dependent cell adhesion proteins. They preferentially interact with themselves in a homophilic manner in connecting cells; cadherins may thus contribute to the sorting of heterogeneous cell types. In terms of biological role, (Microbial infection) Acts as a receptor for human rhinovirus C. The sequence is that of Cadherin-related family member 3 (CDHR3) from Homo sapiens (Human).